Here is a 452-residue protein sequence, read N- to C-terminus: Probable V-type proton ATPase subunit H (452 aa).

It belongs to the V-ATPase H subunit family. In terms of assembly, V-ATPase is a heteromultimeric enzyme composed of a peripheral catalytic V1 complex (components A to H) attached to an integral membrane V0 proton pore complex (components: a, c, c', c'' and d).

In terms of biological role, subunit of the peripheral V1 complex of vacuolar ATPase. Subunit H activates the ATPase activity of the enzyme and couples ATPase activity to proton flow. Vacuolar ATPase is responsible for acidifying a variety of intracellular compartments in eukaryotic cells, thus providing most of the energy required for transport processes in the vacuolar system. The chain is Probable V-type proton ATPase subunit H from Oryza sativa subsp. japonica (Rice).